The chain runs to 260 residues: Phosphate import ATP-binding protein PstB 2 (260 aa).

In terms of domain architecture, ABC transporter spans 9–255 (IKVKDLSFYY…PLDSRTRDYV (247 aa)). 41 to 48 (GPSGCGKS) is an ATP binding site.

Belongs to the ABC transporter superfamily. Phosphate importer (TC 3.A.1.7) family. The complex is composed of two ATP-binding proteins (PstB), two transmembrane proteins (PstC and PstA) and a solute-binding protein (PstS).

The protein resides in the cell inner membrane. It carries out the reaction phosphate(out) + ATP + H2O = ADP + 2 phosphate(in) + H(+). Part of the ABC transporter complex PstSACB involved in phosphate import. Responsible for energy coupling to the transport system. This chain is Phosphate import ATP-binding protein PstB 2, found in Nostoc sp. (strain PCC 7120 / SAG 25.82 / UTEX 2576).